The following is a 338-amino-acid chain: Ribosomal RNA small subunit methyltransferase C (338 aa).

The protein belongs to the methyltransferase superfamily. RsmC family. As to quaternary structure, monomer.

The protein localises to the cytoplasm. It carries out the reaction guanosine(1207) in 16S rRNA + S-adenosyl-L-methionine = N(2)-methylguanosine(1207) in 16S rRNA + S-adenosyl-L-homocysteine + H(+). Its function is as follows. Specifically methylates the guanine in position 1207 of 16S rRNA in the 30S particle. The sequence is that of Ribosomal RNA small subunit methyltransferase C from Buchnera aphidicola subsp. Acyrthosiphon pisum (strain APS) (Acyrthosiphon pisum symbiotic bacterium).